A 930-amino-acid chain; its full sequence is MDYKETLILPDTSFPMRGNLPANEPHTYAKWRDEKLYSKLKNAHSGAKNFCLHDGPPYANGHLHIGHALNKILKDIIVKYHYFKGENIRYTPGWDCHGLPIEQQVEQKIGKAKKDNLNKTKLRELCRNHAQKFIQIQSDEFQALGVLGDFENPYKTMDFAFEAQIYRSLIELVKEGLLAERSKPIYWSWACETALADAEVEYQDKQSDSIFVAFTLSDSALQSLGISQGKVIIWTTTPWTLPANVGIALNPSESYVLTDKGYIVAKALLEKVCENIDIGISKREFKAQEFERLEAINPLNGRTSLIVLGEHVSINDGTGAVHTAPGHGEDDYYIGLKYGLEVIMPVDDRGNFSPLIESMGLVPKEFANEFVGKNIFDTHESIFKILGKALLKQDVITHSYPHCWRSHKPVIYRATAQWFILLDKPFYQGKTLKELALEELDKVRFYPQNGKNRIYSMIENRPDWCISRQRDWGVPIAFLIDKITNVALLDEAVLEHIACIFEKEGCDAWWSYEIKDLLPPSHKHLAENLTKSKHILDVWFDSGSTWSAVLENEYKGAGNNYDAGSHPADMYLEGSDQHRGWFQSSLLLSCAIAKRAPYKQILTHGFTFDRNGEKMSKSKGNVISPSEIIKTQGSEILRLWVALSHYQSDQNISDEILKQVGEQYRKIRNTIRFLLANASQNSQDMVEKDELDVIDRWILSVCDRVFDEAYEYFDEYEFAKAFQVVMSFLINELSGIYLDLCKDILYCDDVSSLRRRAIQSALVMILRRVLHFIAPVLTYTADEAFRHSSAALKGEYESIFDLPKLSCAQGYNLEINEDFTRLLRVREKFTESLDNLKKQKIVKSSLEVLLQSPQEKEFALLDRWLIVSGVCGKECKDKEELARFMLEDKEEFVIYRAQNGRCERCWQFIVEESEGKLCKRCTSVIAQTKK.

The 'HIGH' region signature appears at 57–67 (PYANGHLHIGH). E573 serves as a coordination point for L-isoleucyl-5'-AMP. The 'KMSKS' region motif lies at 614–618 (KMSKS). K617 provides a ligand contact to ATP. The Zn(2+) site is built by C902, C905, C918, and C921.

This sequence belongs to the class-I aminoacyl-tRNA synthetase family. IleS type 1 subfamily. In terms of assembly, monomer. Requires Zn(2+) as cofactor.

Its subcellular location is the cytoplasm. It catalyses the reaction tRNA(Ile) + L-isoleucine + ATP = L-isoleucyl-tRNA(Ile) + AMP + diphosphate. Its function is as follows. Catalyzes the attachment of isoleucine to tRNA(Ile). As IleRS can inadvertently accommodate and process structurally similar amino acids such as valine, to avoid such errors it has two additional distinct tRNA(Ile)-dependent editing activities. One activity is designated as 'pretransfer' editing and involves the hydrolysis of activated Val-AMP. The other activity is designated 'posttransfer' editing and involves deacylation of mischarged Val-tRNA(Ile). In Helicobacter hepaticus (strain ATCC 51449 / 3B1), this protein is Isoleucine--tRNA ligase.